The chain runs to 371 residues: Peptide chain release factor 2 (371 aa).

Glutamine 253 bears the N5-methylglutamine mark.

The protein belongs to the prokaryotic/mitochondrial release factor family. In terms of processing, methylated by PrmC. Methylation increases the termination efficiency of RF2.

It localises to the cytoplasm. In terms of biological role, peptide chain release factor 2 directs the termination of translation in response to the peptide chain termination codons UGA and UAA. This chain is Peptide chain release factor 2, found in Mycobacterium ulcerans (strain Agy99).